The following is a 350-amino-acid chain: Biotin synthase (350 aa).

Positions 54–278 (REIQLSTLLS…TMPQSYVRLS (225 aa)) constitute a Radical SAM core domain. [4Fe-4S] cluster-binding residues include cysteine 69, cysteine 73, and cysteine 76. 4 residues coordinate [2Fe-2S] cluster: cysteine 113, cysteine 144, cysteine 204, and arginine 276.

It belongs to the radical SAM superfamily. Biotin synthase family. As to quaternary structure, homodimer. [4Fe-4S] cluster serves as cofactor. [2Fe-2S] cluster is required as a cofactor.

It carries out the reaction (4R,5S)-dethiobiotin + (sulfur carrier)-SH + 2 reduced [2Fe-2S]-[ferredoxin] + 2 S-adenosyl-L-methionine = (sulfur carrier)-H + biotin + 2 5'-deoxyadenosine + 2 L-methionine + 2 oxidized [2Fe-2S]-[ferredoxin]. The protein operates within cofactor biosynthesis; biotin biosynthesis; biotin from 7,8-diaminononanoate: step 2/2. In terms of biological role, catalyzes the conversion of dethiobiotin (DTB) to biotin by the insertion of a sulfur atom into dethiobiotin via a radical-based mechanism. The protein is Biotin synthase of Neisseria gonorrhoeae (strain ATCC 700825 / FA 1090).